Consider the following 805-residue polypeptide: Leucine--tRNA ligase (805 aa).

The short motif at 40–51 (PYPSGAGLHVGH) is the 'HIGH' region element. Positions 576-580 (KMSKS) match the 'KMSKS' region motif. Residue Lys579 coordinates ATP.

This sequence belongs to the class-I aminoacyl-tRNA synthetase family.

Its subcellular location is the cytoplasm. The catalysed reaction is tRNA(Leu) + L-leucine + ATP = L-leucyl-tRNA(Leu) + AMP + diphosphate. This Brevibacillus brevis (strain 47 / JCM 6285 / NBRC 100599) protein is Leucine--tRNA ligase.